A 428-amino-acid polypeptide reads, in one-letter code: MKKPFYKVLYVQVIFAIVVGVILGHYYPSLAVDMKPLGDGFIKLIKMVIGPIIFCTVVTGIAGMQDMKKVGRVGGKALLYFEIVSTCALVLGLAATHILRPGVGFNIDPATLNGKEVASYAAKAHGQSSVDFLMHIIPNTMIDAFAQGEILQILLIALLFGSVLAHLGERGRVVTDFIDGITRVLFGIVHIVTKLAPIGAFGAMAFTIGKYGVGSLVPLLKLIGTFYLTSVVFVLVVLGAIARFTGFSIIRFVGYIKEELLIVLGTSSSEAALPQLMEKLEKAGCSRSVVGLVVPTGYSFNLDGTNIYMTMAVLFIAQATNIELTWMQQLTLLAVAMLTSKGASGVTGAGFITLAATLAVVPTIPLSGMVLILGIDRFMSECRALTNIVGNGVATVVVSAWEKELDRAKLRAALSGNGEAAAGEAARV.

Transmembrane regions (helical) follow at residues 8–28, 44–64, 78–98, 148–168, 184–204, 222–242, 307–327, and 355–375; these read VLYVQVIFAIVVGVILGHYYP, LIKMVIGPIIFCTVVTGIAGM, LLYFEIVSTCALVLGLAATHI, GEILQILLIALLFGSVLAHLG, VLFGIVHIVTKLAPIGAFGAM, LIGTFYLTSVVFVLVVLGAIA, IYMTMAVLFIAQATNIELTWM, and AATLAVVPTIPLSGMVLILGI.

The protein belongs to the dicarboxylate/amino acid:cation symporter (DAACS) (TC 2.A.23) family.

The protein localises to the cell inner membrane. Functionally, responsible for the transport of dicarboxylates such as succinate, fumarate, and malate from the periplasm across the membrane. This chain is C4-dicarboxylate transport protein, found in Burkholderia pseudomallei (strain 1106a).